Here is a 511-residue protein sequence, read N- to C-terminus: V-type proton ATPase subunit B (511 aa).

ATP is bound at residue arginine 381. Positions 484 to 511 (FYGRDREQDDDEEEEEDPDKSGDKLIDA) are disordered. Residues 491–501 (QDDDEEEEEDP) show a composition bias toward acidic residues. The span at 502-511 (DKSGDKLIDA) shows a compositional bias: basic and acidic residues.

It belongs to the ATPase alpha/beta chains family. V-ATPase is a heteromultimeric enzyme composed of a peripheral catalytic V1 complex (components A to H) attached to an integral membrane V0 proton pore complex (components: a, c, c', c'', d, e, f and VOA1).

It is found in the vacuole membrane. In terms of biological role, non-catalytic subunit of the V1 complex of vacuolar(H+)-ATPase (V-ATPase), a multisubunit enzyme composed of a peripheral complex (V1) that hydrolyzes ATP and a membrane integral complex (V0) that translocates protons. V-ATPase is responsible for acidifying and maintaining the pH of intracellular compartments. This chain is V-type proton ATPase subunit B (VMA2), found in Candida tropicalis (Yeast).